Consider the following 337-residue polypeptide: Cytoskeleton protein RodZ (337 aa).

Over 1-111 the chain is Cytoplasmic; sequence MNTEATHDQN…LGKRRKKRDG (111 aa). The region spanning 19-71 is the HTH cro/C1-type domain; the sequence is LRNAREQLGLSQQAVAERLCLKVSTVRDIEEDKAPADLASTFLRGYIRSYARL. The segment at residues 30–49 is a DNA-binding region (H-T-H motif); that stretch reads QQAVAERLCLKVSTVRDIEE. A helical; Signal-anchor for type II membrane protein membrane pass occupies residues 112-132; the sequence is WLMTFTWLVLFVVIGLSGAWW. Topologically, residues 133–337 are periplasmic; the sequence is WQDHKAQQEE…TLNAEQSPAQ (205 aa). Positions 145–167 are enriched in polar residues; sequence TMADQSSAELSSNSEQGQSVPLN. The tract at residues 145-218 is disordered; the sequence is TMADQSSAEL…AVVSPSQANV (74 aa). A compositionally biased stretch (low complexity) spans 168–207; sequence TSTTTDPATTSTPPASVDTTATNTQTPAVTAPAPAVDPQQ. The span at 208-218 shows a compositional bias: polar residues; the sequence is NAVVSPSQANV.

This sequence belongs to the RodZ family.

It localises to the cell inner membrane. Functionally, cytoskeletal protein that is involved in cell-shape control through regulation of the length of the long axis. This is Cytoskeleton protein RodZ from Shigella flexneri serotype 5b (strain 8401).